A 622-amino-acid polypeptide reads, in one-letter code: MRLLRRRHMPLRLAMVGCAFVLFLFLLHRDVSSREEATEKPWLKSLVSRKDHVLDLMLEAMNNLRDSMPKLQIRAPEAQQTLFSINQSCLPGFYTPAELKPFWERPPQDPNAPGADGKAFQKSKWTPLETQEKEEGYKKHCFNAFASDRISLQRSLGPDTRPPECVDQKFRRCPPLATTSVIIVFHNEAWSTLLRTVYSVLHTTPAILLKEIILVDDASTEEHLKEKLEQYVKQLQVVRVVRQEERKGLITARLLGASVAQAEVLTFLDAHCECFHGWLEPLLARIAEDKTVVVSPDIVTIDLNTFEFAKPVQRGRVHSRGNFDWSLTFGWETLPPHEKQRRKDETYPIKSPTFAGGLFSISKSYFEHIGTYDNQMEIWGGENVEMSFRVWQCGGQLEIIPCSVVGHVFRTKSPHTFPKGTSVIARNQVRLAEVWMDSYKKIFYRRNLQAAKMAQEKSFGDISERLQLREQLHCHNFSWYLHNVYPEMFVPDLTPTFYGAIKNLGTNQCLDVGENNRGGKPLIMYSCHGLGGNQYFEYTTQRDLRHNIAKQLCLHVSKGALGLGSCHFTGKNSQVPKDEEWELAQDQLIRNSGSGTCLTSQDKKPAMAPCNPSDPHQLWLFV.

Over 1-8 (MRLLRRRH) the chain is Cytoplasmic. The chain crosses the membrane as a helical; Signal-anchor for type II membrane protein span at residues 9-28 (MPLRLAMVGCAFVLFLFLLH). The Lumenal portion of the chain corresponds to 29-622 (RDVSSREEAT…SDPHQLWLFV (594 aa)). The N-linked (GlcNAc...) asparagine glycan is linked to Asn-86. 2 disulfide bridges follow: Cys-165–Cys-402 and Cys-393–Cys-474. Residues 176 to 285 (LATTSVIIVF…HGWLEPLLAR (110 aa)) are catalytic subdomain A. Asp-269, His-271, and His-407 together coordinate Mn(2+). The catalytic subdomain B stretch occupies residues 348 to 410 (PIKSPTFAGG…PCSVVGHVFR (63 aa)). Residue Asn-476 is glycosylated (N-linked (GlcNAc...) asparagine). Residues 506–622 (TNQCLDVGEN…SDPHQLWLFV (117 aa)) form the Ricin B-type lectin domain. An intrachain disulfide couples Cys-509 to Cys-527. Asp-511, Glu-514, His-528, and Asn-533 together coordinate UDP-N-acetyl-alpha-D-galactosamine. Intrachain disulfides connect Cys-553/Cys-566 and Cys-597/Cys-610.

Belongs to the glycosyltransferase 2 family. GalNAc-T subfamily. The cofactor is Mn(2+). Expressed in placenta and trachea. Weakly expressed in brain and pancreas. Expressed in fibroblast. Weakly or not expressed in lung, liver, muscle, kidney, spleen, thymus, prostate, testis, ovary, intestine, colon, leukocyte, stomach, thyroid, spinal cord, lymph node, trachea, adrenal gland and bone marrow.

Its subcellular location is the golgi apparatus membrane. The catalysed reaction is L-seryl-[protein] + UDP-N-acetyl-alpha-D-galactosamine = a 3-O-[N-acetyl-alpha-D-galactosaminyl]-L-seryl-[protein] + UDP + H(+). It carries out the reaction L-threonyl-[protein] + UDP-N-acetyl-alpha-D-galactosamine = a 3-O-[N-acetyl-alpha-D-galactosaminyl]-L-threonyl-[protein] + UDP + H(+). It participates in protein modification; protein glycosylation. Its function is as follows. Catalyzes the initial reaction in O-linked oligosaccharide biosynthesis, the transfer of an N-acetyl-D-galactosamine residue to a serine or threonine residue on the protein receptor. May participate in synthesis of oncofetal fibronectin. Has activity toward MUC1A, MUC2, EA2 and fibronectin peptides. Glycosylates FGF23. This chain is Polypeptide N-acetylgalactosaminyltransferase 6 (GALNT6), found in Homo sapiens (Human).